Consider the following 324-residue polypeptide: MKQVNGQKLLESLGNGVSAIRGRITPDAPMDRVTWFRAGGLAELMFQPHDTDDLTTFLKLVPEEVPVLVVGVGSNLLVRDGGIPGVVIRLSAKGFGDLELAGEHRIKAGAICPDKNLAAMALDHGIGGFYFYYGIPGSIGGALRMNAGANAGETSARVLEVHAVDRKGDRHVLSKSEMGYGYRHSGAAKDLIFTHAIFEGYAEDKAKIRNDMDAVRQHRETVQPIREKTGGSTFKNPEGHSAWKLIDEAGCRGMMIGNAQMSPLHCNFMINTGQATGYELEYLGETVRQRVMDHSGVKLEWEIKRVGNFMPGYEIKEFLGRATA.

Residues 36–211 enclose the FAD-binding PCMH-type domain; sequence FRAGGLAELM…AEDKAKIRND (176 aa). R183 is an active-site residue. S232 (proton donor) is an active-site residue. The active site involves E302.

This sequence belongs to the MurB family. It depends on FAD as a cofactor.

The protein resides in the cytoplasm. It catalyses the reaction UDP-N-acetyl-alpha-D-muramate + NADP(+) = UDP-N-acetyl-3-O-(1-carboxyvinyl)-alpha-D-glucosamine + NADPH + H(+). It functions in the pathway cell wall biogenesis; peptidoglycan biosynthesis. Its function is as follows. Cell wall formation. This Sinorhizobium medicae (strain WSM419) (Ensifer medicae) protein is UDP-N-acetylenolpyruvoylglucosamine reductase.